Reading from the N-terminus, the 313-residue chain is Bifunctional pinoresinol-lariciresinol reductase 1 (313 aa).

Residues Gly-11–Gly-17, Arg-36, and Lys-45 contribute to the NADP(+) site. The active-site Proton acceptor is the Lys-138. Arg-142 contacts NADP(+). Substrate is bound at residue His-271.

It belongs to the NmrA-type oxidoreductase family. Isoflavone reductase subfamily. As to quaternary structure, dimer.

It catalyses the reaction (+)-lariciresinol + NADP(+) = (+)-pinoresinol + NADPH + H(+). The enzyme catalyses (-)-lariciresinol + NADP(+) = (-)-pinoresinol + NADPH + H(+). The catalysed reaction is (+)-secoisolariciresinol + NADP(+) = (-)-lariciresinol + NADPH + H(+). Its function is as follows. Reductase involved in lignan biosynthesis. Catalyzes the enantioselective sequential conversion of (-)-pinoresinol into (-)-lariciresinol and of (-)-lariciresinol into (+)-secoisolariciresinol. Can also convert with a lower efficiency (+)-pinoresinol into (+)-lariciresinol, but not (+)-lariciresinol into (-)-secoisolariciresinol. Abstracts the 4R-hydride from the NADPH cofactor during catalysis. The chain is Bifunctional pinoresinol-lariciresinol reductase 1 (PLR_Tp1) from Thuja plicata (Western red-cedar).